We begin with the raw amino-acid sequence, 183 residues long: UPF0316 protein EF_1609 (183 aa).

Transmembrane regions (helical) follow at residues 1-21, 35-55, and 62-82; these read MVVD…YITL, VIAP…LSMV, and PLNL…GIKI.

Belongs to the UPF0316 family.

The protein resides in the cell membrane. This chain is UPF0316 protein EF_1609, found in Enterococcus faecalis (strain ATCC 700802 / V583).